A 500-amino-acid polypeptide reads, in one-letter code: UDP-N-acetylmuramoyl-L-alanyl-D-glutamate--2,6-diaminopimelate ligase (500 aa).

Serine 38 is a UDP-N-acetyl-alpha-D-muramoyl-L-alanyl-D-glutamate binding site. 118–124 (GTNGKTS) contacts ATP. UDP-N-acetyl-alpha-D-muramoyl-L-alanyl-D-glutamate contacts are provided by residues 160–161 (TT), serine 187, and arginine 195. Lysine 227 is subject to N6-carboxylysine. Meso-2,6-diaminopimelate contacts are provided by residues arginine 395, 419 to 422 (DNPR), glycine 471, and glutamate 475. Positions 419 to 422 (DNPR) match the Meso-diaminopimelate recognition motif motif.

The protein belongs to the MurCDEF family. MurE subfamily. Requires Mg(2+) as cofactor. Post-translationally, carboxylation is probably crucial for Mg(2+) binding and, consequently, for the gamma-phosphate positioning of ATP.

Its subcellular location is the cytoplasm. The enzyme catalyses UDP-N-acetyl-alpha-D-muramoyl-L-alanyl-D-glutamate + meso-2,6-diaminopimelate + ATP = UDP-N-acetyl-alpha-D-muramoyl-L-alanyl-gamma-D-glutamyl-meso-2,6-diaminopimelate + ADP + phosphate + H(+). It functions in the pathway cell wall biogenesis; peptidoglycan biosynthesis. Catalyzes the addition of meso-diaminopimelic acid to the nucleotide precursor UDP-N-acetylmuramoyl-L-alanyl-D-glutamate (UMAG) in the biosynthesis of bacterial cell-wall peptidoglycan. The sequence is that of UDP-N-acetylmuramoyl-L-alanyl-D-glutamate--2,6-diaminopimelate ligase from Leptospira borgpetersenii serovar Hardjo-bovis (strain L550).